A 47-amino-acid chain; its full sequence is Large ribosomal subunit protein eL40 (47 aa).

The protein belongs to the eukaryotic ribosomal protein eL40 family.

The chain is Large ribosomal subunit protein eL40 from Halobacterium salinarum (strain ATCC 29341 / DSM 671 / R1).